The following is a 279-amino-acid chain: Prohibitin-4, mitochondrial (279 aa).

N-acetylglycine is present on Gly-2. The Mitochondrial matrix segment spans residues 2-6 (GSQQV). The helical; Signal-anchor for type II membrane protein transmembrane segment at 7 to 28 (AISFLTNLAKAAFGLGVAATAL) threads the bilayer. Topologically, residues 29-279 (NSSLYTVDGG…SMLFNLNPGR (251 aa)) are mitochondrial intermembrane.

Belongs to the prohibitin family. In terms of assembly, component of a prohibitin multimeric complex in mitochondrial membranes. In terms of tissue distribution, mostly expressed in proliferative tissues, including vasculature, shoot and root apical tissues. Accumulates in dry seeds.

It is found in the mitochondrion inner membrane. Functionally, prohibitin probably acts as a holdase/unfoldase for the stabilization of newly synthesized mitochondrial proteins. The protein is Prohibitin-4, mitochondrial (PHB4) of Arabidopsis thaliana (Mouse-ear cress).